The sequence spans 232 residues: Enolase-phosphatase E1 (232 aa).

Belongs to the HAD-like hydrolase superfamily. MasA/MtnC family. In terms of assembly, monomer. Mg(2+) serves as cofactor.

The catalysed reaction is 5-methylsulfanyl-2,3-dioxopentyl phosphate + H2O = 1,2-dihydroxy-5-(methylsulfanyl)pent-1-en-3-one + phosphate. The protein operates within amino-acid biosynthesis; L-methionine biosynthesis via salvage pathway; L-methionine from S-methyl-5-thio-alpha-D-ribose 1-phosphate: step 3/6. Its pathway is amino-acid biosynthesis; L-methionine biosynthesis via salvage pathway; L-methionine from S-methyl-5-thio-alpha-D-ribose 1-phosphate: step 4/6. Functionally, bifunctional enzyme that catalyzes the enolization of 2,3-diketo-5-methylthiopentyl-1-phosphate (DK-MTP-1-P) into the intermediate 2-hydroxy-3-keto-5-methylthiopentenyl-1-phosphate (HK-MTPenyl-1-P), which is then dephosphorylated to form the acireductone 1,2-dihydroxy-3-keto-5-methylthiopentene (DHK-MTPene). In Xanthomonas campestris pv. campestris (strain 8004), this protein is Enolase-phosphatase E1.